A 455-amino-acid polypeptide reads, in one-letter code: Serine incorporator 2 (455 aa).

11 consecutive transmembrane segments (helical) span residues 5–27, 40–57, 96–118, 131–150, 160–182, 202–224, 239–256, 268–290, 317–339, 385–407, and 422–444; these read LGAC…ILCS, LIFT…IIML, AVYR…MLCV, GFWF…AFYI, FYFG…IDFA, YAGL…ALMF, FISL…AAVL, LLQA…SSIP, QWWD…FISL, TYSY…MTLT, and WTAV…WTLV.

This sequence belongs to the TDE1 family.

Its subcellular location is the cell membrane. It catalyses the reaction a 1,2-diacyl-sn-glycero-3-phospho-L-serine(in) = a 1,2-diacyl-sn-glycero-3-phospho-L-serine(out). The enzyme catalyses a 1,2-diacyl-sn-glycero-3-phosphocholine(in) = a 1,2-diacyl-sn-glycero-3-phosphocholine(out). The catalysed reaction is a 1,2-diacyl-sn-glycero-3-phosphoethanolamine(in) = a 1,2-diacyl-sn-glycero-3-phosphoethanolamine(out). Its function is as follows. Non-ATP-dependent, non-specific lipid transporter for phosphatidylserine, phosphatidylcholine, and phosphatidylethanolamine. Functions as a scramblase that flips lipids in both directions across the membrane. In contrast to SERINC3 and SERINC5, has no effect on HIV-1 particles infectivity. The polypeptide is Serine incorporator 2 (Homo sapiens (Human)).